Consider the following 338-residue polypeptide: Glyceraldehyde-3-phosphate dehydrogenase (338 aa).

Residues Arg13–Ile14, Asp35, and Arg80 contribute to the NAD(+) site. D-glyceraldehyde 3-phosphate-binding positions include Ser151–Thr153, Thr182, Thr211–Gly212, and Arg234. Catalysis depends on Cys152, which acts as the Nucleophile. An NAD(+)-binding site is contributed by Asn316.

This sequence belongs to the glyceraldehyde-3-phosphate dehydrogenase family. In terms of assembly, homotetramer.

The protein localises to the cytoplasm. It carries out the reaction D-glyceraldehyde 3-phosphate + phosphate + NAD(+) = (2R)-3-phospho-glyceroyl phosphate + NADH + H(+). Its pathway is carbohydrate degradation; glycolysis; pyruvate from D-glyceraldehyde 3-phosphate: step 1/5. The chain is Glyceraldehyde-3-phosphate dehydrogenase (GPD) from Sclerotinia sclerotiorum (White mold).